A 312-amino-acid chain; its full sequence is MEIIFYHPTFNAAWWVNALEKALPHARVREWKVGDNNPADYALVWQPPVEMLAGRRLKAVFALGAGVDAILSKLNAHPEMLDASIPLFRLEDTGMGLQMQEYAVSQVLHWFRRFDDYQALKNQALWKPLPEYTREEFSVGIMGAGVLGAKVAESLQAWGFPLRCWSRSRKSWPGVESYVGREELHAFLNQTRVLINLLPNTAQTVGIINSELLDQLPDGAYVLNLARGVHVQEADLLAALDSGKLKGAMLDVFSQEPLPQESPLWRHPRVAMTPHIAAVTRPAEAIDYISRTIAQLEKGESVTGQVDRARGY.

R227 is an active-site residue. The active-site Proton donor is H275.

This sequence belongs to the D-isomer specific 2-hydroxyacid dehydrogenase family. GhrA subfamily.

Its subcellular location is the cytoplasm. The enzyme catalyses glycolate + NADP(+) = glyoxylate + NADPH + H(+). It catalyses the reaction (R)-glycerate + NAD(+) = 3-hydroxypyruvate + NADH + H(+). It carries out the reaction (R)-glycerate + NADP(+) = 3-hydroxypyruvate + NADPH + H(+). Catalyzes the NADPH-dependent reduction of glyoxylate and hydroxypyruvate into glycolate and glycerate, respectively. This Salmonella paratyphi B (strain ATCC BAA-1250 / SPB7) protein is Glyoxylate/hydroxypyruvate reductase A.